Reading from the N-terminus, the 314-residue chain is Aspartate carbamoyltransferase catalytic subunit (314 aa).

Positions 53 and 54 each coordinate carbamoyl phosphate. Position 82 (lysine 82) interacts with L-aspartate. Positions 103, 131, and 134 each coordinate carbamoyl phosphate. Residues arginine 164 and arginine 230 each contribute to the L-aspartate site. Carbamoyl phosphate-binding residues include leucine 267 and proline 268.

The protein belongs to the aspartate/ornithine carbamoyltransferase superfamily. ATCase family. Heterooligomer of catalytic and regulatory chains.

The catalysed reaction is carbamoyl phosphate + L-aspartate = N-carbamoyl-L-aspartate + phosphate + H(+). It participates in pyrimidine metabolism; UMP biosynthesis via de novo pathway; (S)-dihydroorotate from bicarbonate: step 2/3. Functionally, catalyzes the condensation of carbamoyl phosphate and aspartate to form carbamoyl aspartate and inorganic phosphate, the committed step in the de novo pyrimidine nucleotide biosynthesis pathway. The sequence is that of Aspartate carbamoyltransferase catalytic subunit from Methanococcus aeolicus (strain ATCC BAA-1280 / DSM 17508 / OCM 812 / Nankai-3).